The sequence spans 616 residues: Chaperone protein HscA homolog (616 aa).

This sequence belongs to the heat shock protein 70 family.

Its function is as follows. Chaperone involved in the maturation of iron-sulfur cluster-containing proteins. Has a low intrinsic ATPase activity which is markedly stimulated by HscB. This is Chaperone protein HscA homolog from Aliivibrio fischeri (strain ATCC 700601 / ES114) (Vibrio fischeri).